The following is a 197-amino-acid chain: Probable GTP-binding protein EngB (197 aa).

An EngB-type G domain is found at 26–197 (DLPEIALAGR…TSWDAILESL (172 aa)). GTP contacts are provided by residues 34 to 41 (GRSNVGKS), 61 to 65 (GKTQS), 79 to 82 (DVPG), 146 to 149 (TKAD), and 178 to 180 (FSS). Mg(2+) contacts are provided by Ser-41 and Thr-63.

This sequence belongs to the TRAFAC class TrmE-Era-EngA-EngB-Septin-like GTPase superfamily. EngB GTPase family. It depends on Mg(2+) as a cofactor.

In terms of biological role, necessary for normal cell division and for the maintenance of normal septation. This chain is Probable GTP-binding protein EngB, found in Streptococcus mutans serotype c (strain ATCC 700610 / UA159).